A 359-amino-acid polypeptide reads, in one-letter code: Histidinol-phosphate aminotransferase (359 aa).

N6-(pyridoxal phosphate)lysine is present on Lys-217.

The protein belongs to the class-II pyridoxal-phosphate-dependent aminotransferase family. Histidinol-phosphate aminotransferase subfamily. As to quaternary structure, homodimer. Requires pyridoxal 5'-phosphate as cofactor.

The enzyme catalyses L-histidinol phosphate + 2-oxoglutarate = 3-(imidazol-4-yl)-2-oxopropyl phosphate + L-glutamate. It participates in amino-acid biosynthesis; L-histidine biosynthesis; L-histidine from 5-phospho-alpha-D-ribose 1-diphosphate: step 7/9. In Salmonella heidelberg (strain SL476), this protein is Histidinol-phosphate aminotransferase.